A 65-amino-acid polypeptide reads, in one-letter code: Alpha-like toxin Bom4 (65 aa).

In terms of domain architecture, LCN-type CS-alpha/beta spans 2–64; sequence RDAYIAQPEN…VPIRIPGKCH (63 aa). Cystine bridges form between Cys12–Cys63, Cys16–Cys36, Cys22–Cys46, and Cys26–Cys48.

Belongs to the long (4 C-C) scorpion toxin superfamily. Sodium channel inhibitor family. Alpha subfamily. In terms of tissue distribution, expressed by the venom gland.

The protein resides in the secreted. Functionally, alpha toxins bind voltage-independently at site-3 of sodium channels (Nav) and inhibit the inactivation of the activated channels, thereby blocking neuronal transmission. This alpha-like toxin is highly toxic to mice and insects. The polypeptide is Alpha-like toxin Bom4 (Buthus occitanus mardochei (Moroccan scorpion)).